A 214-amino-acid polypeptide reads, in one-letter code: Nascent polypeptide-associated complex subunit alpha (214 aa).

Disordered stretches follow at residues M1–K57 and A119–D179. Acidic residues predominate over residues A22–V38. One can recognise an NAC-A/B domain in the interval S52–A117. Residues A119–Q128 are compositionally biased toward low complexity. A compositionally biased stretch (basic and acidic residues) spans E129–K159. Positions K160–D171 are enriched in acidic residues. The UBA domain occupies L175–I214.

This sequence belongs to the NAC-alpha family. Part of the nascent polypeptide-associated complex (NAC), consisting of EGD2 and EGD1. NAC associates with ribosomes via EGD1.

The protein resides in the cytoplasm. Its subcellular location is the nucleus. In terms of biological role, component of the nascent polypeptide-associated complex (NAC), a dynamic component of the ribosomal exit tunnel, protecting the emerging polypeptides from interaction with other cytoplasmic proteins to ensure appropriate nascent protein targeting. The NAC complex also promotes mitochondrial protein import by enhancing productive ribosome interactions with the outer mitochondrial membrane and blocks the inappropriate interaction of ribosomes translating non-secretory nascent polypeptides with translocation sites in the membrane of the endoplasmic reticulum. EGD2 may also be involved in transcription regulation. In Sclerotinia sclerotiorum (strain ATCC 18683 / 1980 / Ss-1) (White mold), this protein is Nascent polypeptide-associated complex subunit alpha (egd2).